Reading from the N-terminus, the 356-residue chain is Nicotinate-nucleotide--dimethylbenzimidazole phosphoribosyltransferase (356 aa).

The Proton acceptor role is filled by E317.

The protein belongs to the CobT family. As to quaternary structure, homodimer.

It carries out the reaction 5,6-dimethylbenzimidazole + nicotinate beta-D-ribonucleotide = alpha-ribazole 5'-phosphate + nicotinate + H(+). It participates in nucleoside biosynthesis; alpha-ribazole biosynthesis; alpha-ribazole from 5,6-dimethylbenzimidazole: step 1/2. In terms of biological role, catalyzes the synthesis of alpha-ribazole-5'-phosphate from nicotinate mononucleotide (NAMN) and 5,6-dimethylbenzimidazole (DMB). The sequence is that of Nicotinate-nucleotide--dimethylbenzimidazole phosphoribosyltransferase from Salmonella gallinarum (strain 287/91 / NCTC 13346).